A 329-amino-acid polypeptide reads, in one-letter code: CDP-6-deoxy-L-threo-D-glycero-4-hexulose-3-dehydrase reductase (329 aa).

Residues 2–93 form the 2Fe-2S ferredoxin-type domain; sequence SLNVKLHPSG…ELDVNYYPEL (92 aa). [2Fe-2S] cluster-binding residues include Cys-37, Cys-42, Cys-45, and Cys-75. Positions 98 to 197 constitute an FAD-binding FR-type domain; that stretch reads KKTYPCKLDS…EGPQGTFFVR (100 aa).

Monomer.

The protein operates within nucleotide-sugar biosynthesis; CDP-ascarylose biosynthesis. It functions in the pathway bacterial outer membrane biogenesis; lipopolysaccharide biosynthesis. Its function is as follows. Participates in the conversion of CDP-6-deoxy-D-glycero-L-threo-4-hexulose to 3,6-dideoxy-D-glycero-D-glycero-4-hexulose together with CDP-6-deoxy-D-glycero-L-threo-4-hexulose-3-dehydrase (E1) in two consecutive steps. The detailed mechanism of E3 is not yet resolved. This is CDP-6-deoxy-L-threo-D-glycero-4-hexulose-3-dehydrase reductase (ascD) from Yersinia pseudotuberculosis serotype I (strain IP32953).